The following is a 124-amino-acid chain: Small ribosomal subunit protein uS12 (124 aa).

Asp89 is modified (3-methylthioaspartic acid).

The protein belongs to the universal ribosomal protein uS12 family. In terms of assembly, part of the 30S ribosomal subunit. Contacts proteins S8 and S17. May interact with IF1 in the 30S initiation complex.

Functionally, with S4 and S5 plays an important role in translational accuracy. In terms of biological role, interacts with and stabilizes bases of the 16S rRNA that are involved in tRNA selection in the A site and with the mRNA backbone. Located at the interface of the 30S and 50S subunits, it traverses the body of the 30S subunit contacting proteins on the other side and probably holding the rRNA structure together. The combined cluster of proteins S8, S12 and S17 appears to hold together the shoulder and platform of the 30S subunit. The protein is Small ribosomal subunit protein uS12 of Buchnera aphidicola subsp. Schizaphis graminum (strain Sg).